A 223-amino-acid chain; its full sequence is Gastrula zinc finger protein XlCGF52.1 (223 aa).

8 C2H2-type zinc fingers span residues Phe-6–His-27, Phe-33–His-55, Tyr-61–His-83, Phe-89–His-111, Phe-117–His-139, Tyr-145–His-167, Tyr-173–His-195, and Phe-201–His-223.

Belongs to the krueppel C2H2-type zinc-finger protein family.

The protein resides in the nucleus. Its function is as follows. May be involved in transcriptional regulation. This chain is Gastrula zinc finger protein XlCGF52.1, found in Xenopus laevis (African clawed frog).